We begin with the raw amino-acid sequence, 133 residues long: Exonuclease VapC9 (133 aa).

The PINc domain occupies 5–113 (YLVDASALYA…LVLVTQDREL (109 aa)). Mg(2+) contacts are provided by aspartate 8, aspartate 92, and aspartate 110.

Belongs to the PINc/VapC protein family. As to quaternary structure, homodimer, 2 of which then form a homotetramer. Mg(2+) is required as a cofactor.

With respect to regulation, inhibited by EDTA. Functionally, toxic component of a type II toxin-antitoxin (TA) system. In terms of biological role, has ribonuclease activity. Has a slow ssDNA exonuclease activity. The chain is Exonuclease VapC9 from Pyrobaculum aerophilum (strain ATCC 51768 / DSM 7523 / JCM 9630 / CIP 104966 / NBRC 100827 / IM2).